The chain runs to 177 residues: ATP synthase subunit delta (177 aa).

Belongs to the ATPase delta chain family. As to quaternary structure, F-type ATPases have 2 components, F(1) - the catalytic core - and F(0) - the membrane proton channel. F(1) has five subunits: alpha(3), beta(3), gamma(1), delta(1), epsilon(1). F(0) has three main subunits: a(1), b(2) and c(10-14). The alpha and beta chains form an alternating ring which encloses part of the gamma chain. F(1) is attached to F(0) by a central stalk formed by the gamma and epsilon chains, while a peripheral stalk is formed by the delta and b chains.

The protein localises to the cell inner membrane. Functionally, f(1)F(0) ATP synthase produces ATP from ADP in the presence of a proton or sodium gradient. F-type ATPases consist of two structural domains, F(1) containing the extramembraneous catalytic core and F(0) containing the membrane proton channel, linked together by a central stalk and a peripheral stalk. During catalysis, ATP synthesis in the catalytic domain of F(1) is coupled via a rotary mechanism of the central stalk subunits to proton translocation. This protein is part of the stalk that links CF(0) to CF(1). It either transmits conformational changes from CF(0) to CF(1) or is implicated in proton conduction. This chain is ATP synthase subunit delta, found in Edwardsiella ictaluri (strain 93-146).